The sequence spans 424 residues: Kynurenine--oxoglutarate transaminase 1 (424 aa).

Gly36 is a substrate binding site. Lys82 carries the post-translational modification N6-succinyllysine. Asn185 lines the substrate pocket. At Lys247 the chain carries N6-(pyridoxal phosphate)lysine. Arg398 contributes to the substrate binding site. N6-succinyllysine is present on Lys413.

Belongs to the class-I pyridoxal-phosphate-dependent aminotransferase family. Homodimer. The cofactor is pyridoxal 5'-phosphate.

It is found in the cytoplasm. It localises to the cytosol. It carries out the reaction L-kynurenine + 2-oxoglutarate = kynurenate + L-glutamate + H2O. It catalyses the reaction 3-phenylpyruvate + L-glutamine = 2-oxoglutaramate + L-phenylalanine. The catalysed reaction is an S-substituted L-cysteine + H2O = a thiol + pyruvate + NH4(+). The protein operates within amino-acid degradation; L-kynurenine degradation; kynurenate from L-kynurenine: step 1/2. Its function is as follows. Catalyzes the irreversible transamination of the L-tryptophan metabolite L-kynurenine to form kynurenic acid (KA), an intermediate in the tryptophan catabolic pathway which is also a broad spectrum antagonist of the three ionotropic excitatory amino acid receptors among others. Metabolizes the cysteine conjugates of certain halogenated alkenes and alkanes to form reactive metabolites. Catalyzes the beta-elimination of S-conjugates and Se-conjugates of L-(seleno)cysteine, resulting in the cleavage of the C-S or C-Se bond. In Mus musculus (Mouse), this protein is Kynurenine--oxoglutarate transaminase 1 (Kyat1).